A 3848-amino-acid polypeptide reads, in one-letter code: Intermembrane lipid transfer protein tipC (3848 aa).

The 109-residue stretch at 4–112 (HIAASVLTKY…KFQDEKQAKL (109 aa)) folds into the Chorein N-terminal domain. Disordered regions lie at residues 243–268 (IKKE…DEIE), 450–481 (LKLQ…TGGG), 966–985 (QQLQ…SPPL), 1174–1219 (KNNQ…NNNS), 1326–1345 (ERKL…GVST), 1907–1926 (ENIN…TTTT), 2024–2047 (DDYN…NQLP), 2209–2290 (IKPA…NKNL), 2330–2353 (FNPK…SPLL), 2509–2541 (KQLN…NLLG), 3209–3228 (GITN…NNND), and 3310–3342 (INQQ…NTTQ). 2 stretches are compositionally biased toward low complexity: residues 251 to 260 (QQQQQQQQQG) and 452 to 477 (LQQQ…PSTS). The segment covering 1175 to 1190 (NNQNNNQNNNQNNNQN) has biased composition (low complexity). Residues 1191-1200 (INESSPTVFI) are compositionally biased toward polar residues. Over residues 1202–1211 (SPPPPPPPPL) the composition is skewed to pro residues. The span at 1333-1345 (TSPTTPSSSGVST) shows a compositional bias: low complexity. Low complexity-rich tracts occupy residues 2029 to 2044 (DNYN…NSNN), 2217 to 2289 (NNNN…NNKN), and 2335 to 2353 (SSSS…SPLL). 2 stretches are compositionally biased toward low complexity: residues 3212–3228 (NDPN…NNND) and 3311–3342 (NQQP…NTTQ).

Belongs to the VPS13 family.

It localises to the membrane. Mediates the transfer of lipids between membranes at organelle contact sites. The protein is Intermembrane lipid transfer protein tipC (tipC) of Dictyostelium discoideum (Social amoeba).